Reading from the N-terminus, the 963-residue chain is Transcription factor cbf12 (963 aa).

Disordered regions lie at residues asparagine 130–leucine 207 and valine 248–lysine 289. Composition is skewed to polar residues over residues phenylalanine 143–leucine 207 and asparagine 249–lysine 289.

This sequence belongs to the Su(H) family.

The protein localises to the nucleus. Transcription factor which function may be to trigger the increase of adhesion at stationary phase, possibly by counteracting or replacing cbf11 at the respective promoters. May also play a cbf11-antagonistic role in the regulation of a number of other important processes such as extracellular material production, colony morphogenesis, ploidy maintenance, or meiosis. This Schizosaccharomyces pombe (strain 972 / ATCC 24843) (Fission yeast) protein is Transcription factor cbf12 (cbf12).